Reading from the N-terminus, the 172-residue chain is NADH-quinone oxidoreductase subunit B (172 aa).

Residues Cys-46, Cys-47, Cys-111, and Cys-141 each contribute to the [4Fe-4S] cluster site.

Belongs to the complex I 20 kDa subunit family. NDH-1 is composed of 14 different subunits. Subunits NuoB, C, D, E, F, and G constitute the peripheral sector of the complex. It depends on [4Fe-4S] cluster as a cofactor.

Its subcellular location is the cell membrane. The catalysed reaction is a quinone + NADH + 5 H(+)(in) = a quinol + NAD(+) + 4 H(+)(out). NDH-1 shuttles electrons from NADH, via FMN and iron-sulfur (Fe-S) centers, to quinones in the respiratory chain. The immediate electron acceptor for the enzyme in this species is believed to be a menaquinone. Couples the redox reaction to proton translocation (for every two electrons transferred, four hydrogen ions are translocated across the cytoplasmic membrane), and thus conserves the redox energy in a proton gradient. The sequence is that of NADH-quinone oxidoreductase subunit B from Bacillus anthracis (strain A0248).